Consider the following 773-residue polypeptide: 3-isopropylmalate dehydratase (773 aa).

Cys355, Cys415, and Cys418 together coordinate [4Fe-4S] cluster.

Belongs to the aconitase/IPM isomerase family. As to quaternary structure, monomer. [4Fe-4S] cluster is required as a cofactor.

It carries out the reaction (2R,3S)-3-isopropylmalate = (2S)-2-isopropylmalate. It functions in the pathway amino-acid biosynthesis; L-leucine biosynthesis; L-leucine from 3-methyl-2-oxobutanoate: step 2/4. Catalyzes the isomerization between 2-isopropylmalate and 3-isopropylmalate, via the formation of 2-isopropylmaleate. The chain is 3-isopropylmalate dehydratase (LEU1) from Mycosarcoma maydis (Corn smut fungus).